Reading from the N-terminus, the 205-residue chain is ATP-dependent Clp protease proteolytic subunit (205 aa).

Ser98 functions as the Nucleophile in the catalytic mechanism. His123 is a catalytic residue.

It belongs to the peptidase S14 family. Fourteen ClpP subunits assemble into 2 heptameric rings which stack back to back to give a disk-like structure with a central cavity, resembling the structure of eukaryotic proteasomes.

It localises to the cytoplasm. It catalyses the reaction Hydrolysis of proteins to small peptides in the presence of ATP and magnesium. alpha-casein is the usual test substrate. In the absence of ATP, only oligopeptides shorter than five residues are hydrolyzed (such as succinyl-Leu-Tyr-|-NHMec, and Leu-Tyr-Leu-|-Tyr-Trp, in which cleavage of the -Tyr-|-Leu- and -Tyr-|-Trp bonds also occurs).. Functionally, cleaves peptides in various proteins in a process that requires ATP hydrolysis. Has a chymotrypsin-like activity. Plays a major role in the degradation of misfolded proteins. The sequence is that of ATP-dependent Clp protease proteolytic subunit from Desulforapulum autotrophicum (strain ATCC 43914 / DSM 3382 / VKM B-1955 / HRM2) (Desulfobacterium autotrophicum).